A 414-amino-acid chain; its full sequence is Schlafen-like protein 1 (414 aa).

The disordered stretch occupies residues 141-203 (LHHREQDDSG…ISQNRPSGVR (63 aa)). Residues 154-185 (SHSPGPSPGPSPGPSPGFRRPPLPQLADPPPN) show a composition bias toward pro residues. 268 to 275 (GVEDSGLV) provides a ligand contact to ATP. The stretch at 373-407 (RQKWTAELSKLEEKVDVLTLEKEQLQEQLRQRQTL) forms a coiled coil.

It belongs to the Schlafen family. Subgroup I subfamily.

In Rattus norvegicus (Rat), this protein is Schlafen-like protein 1 (Slfnl1).